Consider the following 529-residue polypeptide: O-acetylstemmadenine oxidase (529 aa).

The N-terminal stretch at 1–23 (MIKKVPIVLSIFCFLLLLSSSHG) is a signal peptide. A disulfide bond links cysteine 32 and cysteine 92. Residue asparagine 52 is glycosylated (N-linked (GlcNAc...) asparagine). Positions 70-244 (KSPKPLAIIT…VSWKVKLVKV (175 aa)) constitute an FAD-binding PCMH-type domain. Residues 102-108 (IRSGGAD), serine 113, 168-169 (VS), 173-177 (GIGGH), and phenylalanine 183 each bind FAD. An N-linked (GlcNAc...) asparagine glycan is attached at asparagine 293. Tryptophan 465 serves as a coordination point for FAD.

The protein belongs to the oxygen-dependent FAD-linked oxidoreductase family. It depends on FAD as a cofactor. Expressed in leaf epidermis.

It is found in the endoplasmic reticulum. The protein resides in the vacuole. It localises to the vesicle. The catalysed reaction is O-acetyl-15alpha-stemmadenine + O2 = precondylocarpine acetate + H2O2. It participates in alkaloid biosynthesis. Component of the seco-iridoid and derivatives monoterpenoid indole alkaloids (MIAs, e.g. vinblastine, catharanthine, tabersonine, vincadifformine, vindoline, vincristine, quinine and strychnine) biosynthesis pathway. Converts O-acetylstemmadenine (OAS) to reactive acetylated intermediates, likely dihydroprecondylocarpine acetate. In Catharanthus roseus (Madagascar periwinkle), this protein is O-acetylstemmadenine oxidase.